The sequence spans 122 residues: Bet1-like SNARE 1-1 (122 aa).

Residues 1–103 (MNPRREPRGG…VFETKSSRRM (103 aa)) lie on the Cytoplasmic side of the membrane. A t-SNARE coiled-coil homology domain is found at 32 to 94 (EINEHENERA…SGTMDRFKTV (63 aa)). The residue at position 56 (serine 56) is a Phosphoserine. Residues 104-121 (LTLVASFVGLFLVIYYLT) traverse the membrane as a helical; Anchor for type IV membrane protein segment. Position 122 (arginine 122) is a topological domain, vesicular.

Belongs to the BET1 family.

The protein localises to the golgi apparatus membrane. It localises to the endoplasmic reticulum membrane. Its function is as follows. Required for vesicular transport from the ER to the Golgi complex. Functions as a SNARE associated with ER-derived vesicles. In Arabidopsis thaliana (Mouse-ear cress), this protein is Bet1-like SNARE 1-1 (BET11).